Here is a 254-residue protein sequence, read N- to C-terminus: Isoprenyl transferase (254 aa).

Aspartate 24 is an active-site residue. Aspartate 24 is a Mg(2+) binding site. Residues 25-28, tryptophan 29, arginine 37, histidine 41, and 69-71 contribute to the substrate site; these read GNGR and SSE. Residue asparagine 72 is the Proton acceptor of the active site. Residues tryptophan 73, arginine 75, arginine 192, and 198–200 contribute to the substrate site; that span reads RIS. Residue glutamate 211 participates in Mg(2+) binding.

The protein belongs to the UPP synthase family. As to quaternary structure, homodimer. Mg(2+) is required as a cofactor.

Catalyzes the condensation of isopentenyl diphosphate (IPP) with allylic pyrophosphates generating different type of terpenoids. The polypeptide is Isoprenyl transferase (Bordetella parapertussis (strain 12822 / ATCC BAA-587 / NCTC 13253)).